The chain runs to 248 residues: Mannose-binding protein C (248 aa).

The first 20 residues, 1 to 20 (MSLFPSLPLLLLSMVAASYS), serve as a signal peptide directing secretion. One can recognise a Collagen-like domain in the interval 42-99 (GINGFPGKDGRDGTKGEKGEPGQGLRGLQGPPGKLGPPGNPGPSGSPGAKGQKGDPGA). Residues 43-112 (INGFPGKDGR…CDSSLANPER (70 aa)) form a disordered region. A 4-hydroxyproline modification is found at P47. Residues 49-61 (KDGRDGTKGEKGE) are compositionally biased toward basic and acidic residues. 4-hydroxyproline is present on residues P73, P79, P82, and P88. Positions 112–130 (RKTLQTEINRIKKWVTFSL) form a coiled coil. In terms of domain architecture, C-type lectin spans 134 to 245 (VGKKLFLTNG…CSSSHLVICE (112 aa)). 2 disulfide bridges follow: C155-C244 and C222-C236.

In terms of assembly, oligomeric complex of 3 or more homotrimers. Interacts with MASP1 and MASP2. Interacts with MEP1A and MEP1B and may inhibit their catalytic activity. Post-translationally, hydroxylation on proline residues within the sequence motif, GXPG, is most likely to be 4-hydroxy as this fits the requirement for 4-hydroxylation in vertebrates.

Its subcellular location is the secreted. In terms of biological role, calcium-dependent lectin involved in innate immune defense. Binds mannose, fucose and N-acetylglucosamine on different microorganisms and activates the lectin complement pathway. Binds to late apoptotic cells, as well as to apoptotic blebs and to necrotic cells, but not to early apoptotic cells, facilitating their uptake by macrophages. The chain is Mannose-binding protein C (MBL2) from Callithrix jacchus (White-tufted-ear marmoset).